Reading from the N-terminus, the 1027-residue chain is INO80 complex subunit D (1027 aa).

A Glycyl lysine isopeptide (Lys-Gly) (interchain with G-Cter in SUMO2) cross-link involves residue K87. A Phosphoserine modification is found at S132. Disordered regions lie at residues 193–278 (HFSP…VDPP), 519–574 (RGDN…LSMP), 813–850 (RQQY…HTTS), 914–969 (LSTS…TSPK), and 982–1027 (QLSS…PSPN). Residues 201–216 (SQQQPPQQHSHLSPLS) show a composition bias toward low complexity. The span at 229 to 257 (VCKSPQPQNTSLPMQGVAPTTHTIAQARQ) shows a compositional bias: polar residues. The span at 525–559 (KVQHQQQRKPRKKTKPPALTKKHKKKRRRGPRRPQ) shows a compositional bias: basic residues. Residues 914–932 (LSTSLSTPPTTSNSETTQP) show a composition bias toward low complexity. Positions 937–954 (VTPSSSSVLPGLPQTSFS) are enriched in polar residues. Residues 1001 to 1027 (APPTGFTVTGATATSTNNASSPFPSPN) show a composition bias toward low complexity.

This sequence belongs to the INO80D family. Component of the chromatin remodeling INO80 complex; specifically part of a complex module associated with the N-terminus of INO80.

Its subcellular location is the nucleus. Its function is as follows. Putative regulatory component of the chromatin remodeling INO80 complex which is involved in transcriptional regulation, DNA replication and probably DNA repair. The protein is INO80 complex subunit D of Homo sapiens (Human).